The following is an 828-amino-acid chain: MSSKQATSPFACAADGEDAMTQDLTSREKEEGSDQHVASHLPLHPIMHNKPHSEELPTLVSTIQQDADWDSVLSSQQRMESENNKLCSLYSFRNTSTSPHKPDEGSRDREIMTSVTFGTPERRKGSLADVVDTLKQKKLEEMTRTEQEDSSCMEKLLSKDWKEKMERLNTSELLGEIKGTPESLAEKERQLSTMITQLISLREQLLAAHDEQKKLAASQIEKQRQQMDLARQQQEQIARQQQQLLQQQHKINLLQQQIQVQGHMPPLMIPIFPHDQRTLAAAAAAQQGFLFPPGITYKPGDNYPVQFIPSTMAAAAASGLSPLQLQKGHVSHPQINQRLKGLSDRFGRNLDTFEHGGGHSYNHKQIEQLYAAQLASMQVSPGAKMPSTPQPPNTAGTVSPTGIKNEKRGTSPVTQVKDEAAAQPLNLSSRPKTAEPVKSPTSPTQNLFPASKTSPVNLPNKSSIPSPIGGSLGRGSSLDILSSLNSPALFGDQDTVMKAIQEARKMREQIQREQQQQQPHGVDGKLSSINNMGLNSCRNEKERTRFENLGPQLTGKSNEDGKLGPGVIDLTRPEDAEGSKAMNGSAAKLQQYYCWPTGGATVAEARVYRDARGRASSEPHIKRPMNAFMVWAKDERRKILQAFPDMHNSNISKILGSRWKSMSNQEKQPYYEEQARLSKIHLEKYPNYKYKPRPKRTCIVDGKKLRIGEYKQLMRSRRQEMRQFFTVGQQPQIPITTGTGVVYPGAITMATTTPSPQMTSDCSSTSASPEPSLPVIQSTYGMKTDGGSLAGNEMINGEDEMEMYDDYEDDPKSDYSSENEAPEAVSAN.

The segment at 1–51 (MSSKQATSPFACAADGEDAMTQDLTSREKEEGSDQHVASHLPLHPIMHNKP) is disordered. Positions 25 to 34 (TSREKEEGSD) are enriched in basic and acidic residues. Thr119 is subject to Phosphothreonine. Residues 184 to 262 (LAEKERQLST…LLQQQIQVQG (79 aa)) adopt a coiled-coil conformation. The interval 380 to 470 (SPGAKMPSTP…KSSIPSPIGG (91 aa)) is disordered. A compositionally biased stretch (polar residues) spans 393-402 (NTAGTVSPTG). Phosphoserine is present on Ser399. Thr401 carries the post-translational modification Phosphothreonine. Residues Lys404 and Lys417 each participate in a glycyl lysine isopeptide (Lys-Gly) (interchain with G-Cter in SUMO) cross-link. 2 positions are modified to phosphoserine: Ser439 and Ser442. The span at 439–461 (SPTSPTQNLFPASKTSPVNLPNK) shows a compositional bias: polar residues. A DNA-binding region (HMG box) is located at residues 621–689 (IKRPMNAFMV…IHLEKYPNYK (69 aa)). The span at 753 to 781 (TPSPQMTSDCSSTSASPEPSLPVIQSTYG) shows a compositional bias: polar residues. The interval 753-828 (TPSPQMTSDC…NEAPEAVSAN (76 aa)) is disordered. A compositionally biased stretch (acidic residues) spans 796–809 (NGEDEMEMYDDYED).

In terms of assembly, homodimer. Interacts with DAZAP2. May interact with CENPK. In terms of processing, sumoylation inhibits the transcriptional activity. As to expression, expressed in a wide variety of tissues, most abundantly in skeletal musclen.

The protein localises to the nucleus. It localises to the cytoplasm. In terms of biological role, transcription factor that plays a key role in several developmental processes, including neurogenesis, chondrocytes differentiation and cartilage formation. Specifically binds the 5'-AACAAT-3' DNA motif present in enhancers and super-enhancers and promotes expression of genes important for chondrogenesis. Required for overt chondrogenesis when condensed prechondrocytes differentiate into early stage chondrocytes: SOX5 and SOX6 cooperatively bind with SOX9 on active enhancers and super-enhancers associated with cartilage-specific genes, and thereby potentiate SOX9's ability to transactivate. Not involved in precartilaginous condensation, the first step in chondrogenesis, during which skeletal progenitors differentiate into prechondrocytes. Together with SOX5, required to form and maintain a pool of highly proliferating chondroblasts between epiphyses and metaphyses, to form columnar chondroblasts, delay chondrocyte prehypertrophy but promote hypertrophy, and to delay terminal differentiation of chondrocytes on contact with ossification fronts. Binds to the proximal promoter region of the myelin protein MPZ gene, and is thereby involved in the differentiation of oligodendroglia in the developing spinal tube. Binds to the gene promoter of MBP and acts as a transcriptional repressor. The chain is Transcription factor SOX-6 from Homo sapiens (Human).